The following is a 407-amino-acid chain: Probable tRNA sulfurtransferase (407 aa).

Residues asparagine 61–valine 165 enclose the THUMP domain. ATP-binding positions include methionine 183 to leucine 184, histidine 208 to phenylalanine 209, arginine 265, glycine 287, and glutamine 296.

Belongs to the ThiI family.

Its subcellular location is the cytoplasm. It catalyses the reaction [ThiI sulfur-carrier protein]-S-sulfanyl-L-cysteine + a uridine in tRNA + 2 reduced [2Fe-2S]-[ferredoxin] + ATP + H(+) = [ThiI sulfur-carrier protein]-L-cysteine + a 4-thiouridine in tRNA + 2 oxidized [2Fe-2S]-[ferredoxin] + AMP + diphosphate. The enzyme catalyses [ThiS sulfur-carrier protein]-C-terminal Gly-Gly-AMP + S-sulfanyl-L-cysteinyl-[cysteine desulfurase] + AH2 = [ThiS sulfur-carrier protein]-C-terminal-Gly-aminoethanethioate + L-cysteinyl-[cysteine desulfurase] + A + AMP + 2 H(+). It functions in the pathway cofactor biosynthesis; thiamine diphosphate biosynthesis. Functionally, catalyzes the ATP-dependent transfer of a sulfur to tRNA to produce 4-thiouridine in position 8 of tRNAs, which functions as a near-UV photosensor. Also catalyzes the transfer of sulfur to the sulfur carrier protein ThiS, forming ThiS-thiocarboxylate. This is a step in the synthesis of thiazole, in the thiamine biosynthesis pathway. The sulfur is donated as persulfide by IscS. The sequence is that of Probable tRNA sulfurtransferase from Staphylococcus aureus (strain JH1).